The primary structure comprises 348 residues: NADH-ubiquinone oxidoreductase chain 2 (348 aa).

11 helical membrane passes run 1–21 (MNPY…TLTF), 25–45 (HWIL…PLMA), 60–80 (FLIQ…NAWI), 99–119 (MFAL…PEVL), 124–144 (LLTG…LIIQ), 151–171 (PLIL…SGLN), 178–197 (ILAY…IQYA), 202–224 (LIAL…VLSA), 239–259 (ILAA…PLTG), 274–294 (DLPA…FFYL), and 326–346 (LTIS…ILML).

Belongs to the complex I subunit 2 family. As to quaternary structure, core subunit of respiratory chain NADH dehydrogenase (Complex I) which is composed of 45 different subunits.

The protein resides in the mitochondrion inner membrane. It catalyses the reaction a ubiquinone + NADH + 5 H(+)(in) = a ubiquinol + NAD(+) + 4 H(+)(out). Functionally, core subunit of the mitochondrial membrane respiratory chain NADH dehydrogenase (Complex I) which catalyzes electron transfer from NADH through the respiratory chain, using ubiquinone as an electron acceptor. Essential for the catalytic activity and assembly of complex I. The chain is NADH-ubiquinone oxidoreductase chain 2 (mt-nd2) from Danio rerio (Zebrafish).